The primary structure comprises 142 residues: Large-conductance mechanosensitive channel (142 aa).

The next 3 helical transmembrane spans lie at 14 to 34, 38 to 58, and 82 to 102; these read VMDL…VDSV, LVMP…NYFL, and GNFI…FLLI.

It belongs to the MscL family. As to quaternary structure, homopentamer.

The protein resides in the cell inner membrane. In terms of biological role, channel that opens in response to stretch forces in the membrane lipid bilayer. May participate in the regulation of osmotic pressure changes within the cell. This chain is Large-conductance mechanosensitive channel, found in Rhizobium meliloti (strain 1021) (Ensifer meliloti).